A 365-amino-acid chain; its full sequence is MASAFCSLCPTPTSLFSSHALIPTLQWRSSSSSRSPPLHISRVLSVETVPLSPSFTWNDVFENSRKEYVPQNSSDLTGFLEKVDRCNRGLEKLGEFIPFVIEEQIVGYIHKGFTKYLRDFNDIFTFSQYGGHVTLNMMLDKPEERTRAVAHVIKILGNKGIIPGIRNELYPVKPSFNAPAFFSIERAAAPYFGLKGYAIHVNGYVERDGQKFLWIGKRSLAKSTYPGKLDHLVAGGLPHGISVCENLVKECEEEAGISKVLADRAIAVGVVSYMDIDRYCFTRDVLFCYDLELPQDFVPTNQDGEVDSFRLIPVAQVANVVRKTSFFKDSCSLVIIDFLFRHGLIRPESPGYLDLYRRLRNGDCS.

The N-terminal 30 residues, Met1 to Ser30, are a transit peptide targeting the chloroplast. Residues Gly196–Asp337 form the Nudix hydrolase domain. Positions Gly235–Gly256 match the Nudix box motif. Mg(2+)-binding residues include Glu250 and Glu254.

Belongs to the Nudix hydrolase family. Mg(2+) is required as a cofactor. Requires Mn(2+) as cofactor. In terms of tissue distribution, expressed in leaves.

Its subcellular location is the plastid. The protein resides in the chloroplast. Its function is as follows. Probably mediates the hydrolysis of some nucleoside diphosphate derivatives. This Arabidopsis thaliana (Mouse-ear cress) protein is Nudix hydrolase 24, chloroplastic (NUDT24).